Here is a 278-residue protein sequence, read N- to C-terminus: Orotidine 5'-phosphate decarboxylase (278 aa).

The active-site Proton donor is K96.

It belongs to the OMP decarboxylase family. Type 2 subfamily.

The enzyme catalyses orotidine 5'-phosphate + H(+) = UMP + CO2. The protein operates within pyrimidine metabolism; UMP biosynthesis via de novo pathway; UMP from orotate: step 2/2. This Salinispora arenicola (strain CNS-205) protein is Orotidine 5'-phosphate decarboxylase.